Reading from the N-terminus, the 238-residue chain is Histidine/lysine/arginine/ornithine transport system permease protein HisM (238 aa).

Topologically, residues 1–26 (MIEILHEYWKPLLWTDGYRFTGVAIT) are periplasmic. The ABC transmembrane type-1 domain occupies 23–221 (VAITLWLLIL…IISYVLISLF (199 aa)). A helical membrane pass occupies residues 27 to 47 (LWLLILSVVIGGVLALFLAIG). Over 48–58 (RVSSNKYIQFP) the chain is Cytoplasmic. Residues 59-79 (IWLFTYIFRGTPLYVQLLVFY) traverse the membrane as a helical segment. Residues 80–104 (SGMYTLEIVKGTEFLNAFFRSGLNC) lie on the Periplasmic side of the membrane. The chain crosses the membrane as a helical span at residues 105–125 (TVLALTLNTCAYTTEIFAGAI). Residues 126-157 (RSVPHGEIEAARAYGFSTFKMYRCIILPSALR) are Cytoplasmic-facing. Residues 158–178 (IALPAYSNEVILMLHSTALAF) form a helical membrane-spanning segment. The Periplasmic portion of the chain corresponds to 179–199 (TATVPDLLKIARDINAATYQP). Residues 200–220 (FTAFGIAAVLYLIISYVLISL) traverse the membrane as a helical segment. At 221 to 238 (FRRAEKRWLQHVKPSSTH) the chain is on the cytoplasmic side.

The protein belongs to the binding-protein-dependent transport system permease family. HisMQ subfamily. The HisPMQJ complex is composed of two ATP-binding proteins (HisP), two transmembrane proteins (HisM and HisQ) and a solute-binding protein (HisJ). The HisPMQ-ArgT complex is composed of two ATP-binding proteins (HisP), two transmembrane proteins (HisM and HisQ) and a solute-binding protein (ArgT).

The protein localises to the cell inner membrane. Its function is as follows. Part of the ABC transporter complex HisPMQJ involved in histidine transport. Is also part of the ABC transporter complex HisPMQ-ArgT involved in lysine/arginine/ornithine transport. Probably responsible for the translocation of the substrate across the membrane. This chain is Histidine/lysine/arginine/ornithine transport system permease protein HisM (hisM), found in Escherichia coli O157:H7.